Reading from the N-terminus, the 304-residue chain is Energy-coupling factor transporter ATP-binding protein EcfA2 (304 aa).

The ABC transporter domain maps to 11 to 260 (LKADEILAVS…QTFLEKTTIV (250 aa)). Residue 54-61 (GDSGSGKS) participates in ATP binding.

The protein belongs to the ABC transporter superfamily. Energy-coupling factor EcfA family. As to quaternary structure, forms a stable energy-coupling factor (ECF) transporter complex composed of 2 membrane-embedded substrate-binding proteins (S component), 2 ATP-binding proteins (A component) and 2 transmembrane proteins (T component).

The protein localises to the cell membrane. Its function is as follows. ATP-binding (A) component of a common energy-coupling factor (ECF) ABC-transporter complex. Unlike classic ABC transporters this ECF transporter provides the energy necessary to transport a number of different substrates. This is Energy-coupling factor transporter ATP-binding protein EcfA2 from Mycoplasma genitalium (strain ATCC 33530 / DSM 19775 / NCTC 10195 / G37) (Mycoplasmoides genitalium).